A 176-amino-acid chain; its full sequence is Protein GrpE (176 aa).

The protein belongs to the GrpE family. In terms of assembly, homodimer.

The protein resides in the cytoplasm. Functionally, participates actively in the response to hyperosmotic and heat shock by preventing the aggregation of stress-denatured proteins, in association with DnaK and GrpE. It is the nucleotide exchange factor for DnaK and may function as a thermosensor. Unfolded proteins bind initially to DnaJ; upon interaction with the DnaJ-bound protein, DnaK hydrolyzes its bound ATP, resulting in the formation of a stable complex. GrpE releases ADP from DnaK; ATP binding to DnaK triggers the release of the substrate protein, thus completing the reaction cycle. Several rounds of ATP-dependent interactions between DnaJ, DnaK and GrpE are required for fully efficient folding. The chain is Protein GrpE from Rickettsia bellii (strain OSU 85-389).